Consider the following 199-residue polypeptide: Ribonuclease HII (199 aa).

The RNase H type-2 domain maps to 11–199; it reads SRVAGVDEVG…RRSFLRRLLG (189 aa). The a divalent metal cation site is built by aspartate 17, glutamate 18, and aspartate 113.

The protein belongs to the RNase HII family. Requires Mn(2+) as cofactor. Mg(2+) serves as cofactor.

The protein resides in the cytoplasm. The catalysed reaction is Endonucleolytic cleavage to 5'-phosphomonoester.. Functionally, endonuclease that specifically degrades the RNA of RNA-DNA hybrids. This Synechococcus sp. (strain CC9902) protein is Ribonuclease HII.